Consider the following 540-residue polypeptide: Phosphoenolpyruvate carboxykinase (ATP) (540 aa).

Arginine 65 contributes to the substrate binding site. Lysine 87 is subject to N6-acetyllysine. Substrate-binding residues include tyrosine 207 and lysine 213. ATP-binding positions include lysine 213, histidine 232, and 248–256; that span reads GLSGTGKTT. Residues lysine 213 and histidine 232 each coordinate Mn(2+). Aspartate 269 provides a ligand contact to Mn(2+). ATP is bound by residues glutamate 297, arginine 333, 449–450, and threonine 455; that span reads RI. Arginine 333 provides a ligand contact to substrate. Lysine 523 carries the post-translational modification N6-acetyllysine.

Belongs to the phosphoenolpyruvate carboxykinase (ATP) family. As to quaternary structure, monomer. Mn(2+) is required as a cofactor.

The protein resides in the cytoplasm. The enzyme catalyses oxaloacetate + ATP = phosphoenolpyruvate + ADP + CO2. It participates in carbohydrate biosynthesis; gluconeogenesis. Its function is as follows. Involved in the gluconeogenesis. Catalyzes the conversion of oxaloacetate (OAA) to phosphoenolpyruvate (PEP) through direct phosphoryl transfer between the nucleoside triphosphate and OAA. The protein is Phosphoenolpyruvate carboxykinase (ATP) of Escherichia coli O6:K15:H31 (strain 536 / UPEC).